A 275-amino-acid chain; its full sequence is Nitrogenase iron protein 1 (275 aa).

9-16 contributes to the ATP binding site; the sequence is GKGGIGKS. Residue Cys-98 coordinates [4Fe-4S] cluster. At Arg-101 the chain carries ADP-ribosylarginine; by dinitrogenase reductase ADP-ribosyltransferase. [4Fe-4S] cluster is bound at residue Cys-132.

This sequence belongs to the NifH/BchL/ChlL family. As to quaternary structure, homodimer. Requires [4Fe-4S] cluster as cofactor. The reversible ADP-ribosylation of Arg-101 inactivates the nitrogenase reductase and regulates nitrogenase activity.

The catalysed reaction is N2 + 8 reduced [2Fe-2S]-[ferredoxin] + 16 ATP + 16 H2O = H2 + 8 oxidized [2Fe-2S]-[ferredoxin] + 2 NH4(+) + 16 ADP + 16 phosphate + 6 H(+). In terms of biological role, the key enzymatic reactions in nitrogen fixation are catalyzed by the nitrogenase complex, which has 2 components: the iron protein and the molybdenum-iron protein. The polypeptide is Nitrogenase iron protein 1 (nifH1) (Methanobacterium ivanovii).